The following is a 423-amino-acid chain: MSASSPDQRLDHLLSAVESEFQKGSEKGDASERDIKLSLEDAELWTKFKELTNEMIVTKTGRRMFPVLRASVTGLDPNAMYSVLLDFVAADNNRWKYVNGEWVPGGKPEPQSPSCVYIHPDSPNFGAHWMKAPVSFSKVKLSNKLNGGGQIMLNSLHKYEPRIHIVKVGGIQKMISSQSFPETQFIAVTAYQNEEITALKIKHNPFAKAFLDAKERSDHKEVPDHSTDNQQSGYSQLGGWFLPSNGPMGPSSSPPQFNGAPVHSSGSYCERYSSLRNHRAAPYPSHYSHRSTTTNNYMDNSSGSLASHDSWSALQIPNSSGMGTLAHTTNTTSNTSQYPSLWSVAGTTLTPSGSASGSITGGLTSQFLRGSSMSYSGLTSSLPVSSPSSMYDPGLSEVGVGDAQFESSIARLTASWAPVAQSY.

Residues 44–212 (LWTKFKELTN…HNPFAKAFLD (169 aa)) constitute a DNA-binding region (T-box). Residues 215–227 (ERSDHKEVPDHST) are compositionally biased toward basic and acidic residues. Disordered stretches follow at residues 215–234 (ERSDHKEVPDHSTDNQQSGY) and 280–304 (AAPYPSHYSHRSTTTNNYMDNSSGS). Over residues 290–304 (RSTTTNNYMDNSSGS) the composition is skewed to polar residues.

As to quaternary structure, monomer. Binds DNA as a monomer. In terms of tissue distribution, first expressed at the dorsal side of the blastula embryo. Expressed in the germ ring, shield and chordamesoderm during gastrulation and is restricted to the notochord and tailbud during somitogenesis (at protein level).

Its subcellular location is the nucleus. Functionally, involved in the transcriptional regulation of genes required for mesoderm differentiation, including itself. Indispensable for the formation of the notochord and the tail structure. Functions together with tbx16/spadetail in development of trunk and tail mesoderm. Functions by itself early in development to repress medial floor plate and promote notochord fate but at later times, functions together with tbx16/spadetail to promote medial floor plate formation. Acts in a parallel pathway to, but cooperates with, non-canonical wnt-signaling during tail formation. Required for the morphogenesis of Kupffer's vesicle and regulates left-right asymmetry. This is T-box transcription factor T-A (tbxta) from Danio rerio (Zebrafish).